The following is a 456-amino-acid chain: Adenylosuccinate lyase (456 aa).

Residues 15 to 16 (RY), 90 to 92 (NHD), and 122 to 123 (TS) each bind N(6)-(1,2-dicarboxyethyl)-AMP. H171 functions as the Proton donor/acceptor in the catalytic mechanism. Q247 serves as a coordination point for N(6)-(1,2-dicarboxyethyl)-AMP. S295 serves as the catalytic Proton donor/acceptor. N(6)-(1,2-dicarboxyethyl)-AMP contacts are provided by residues S296, 301–303 (KIN), N309, R335, and 340–344 (STVLR).

Belongs to the lyase 1 family. Adenylosuccinate lyase subfamily. As to quaternary structure, homotetramer. Residues from neighboring subunits contribute catalytic and substrate-binding residues to each active site.

The enzyme catalyses N(6)-(1,2-dicarboxyethyl)-AMP = fumarate + AMP. The catalysed reaction is (2S)-2-[5-amino-1-(5-phospho-beta-D-ribosyl)imidazole-4-carboxamido]succinate = 5-amino-1-(5-phospho-beta-D-ribosyl)imidazole-4-carboxamide + fumarate. Its pathway is purine metabolism; AMP biosynthesis via de novo pathway; AMP from IMP: step 2/2. It functions in the pathway purine metabolism; IMP biosynthesis via de novo pathway; 5-amino-1-(5-phospho-D-ribosyl)imidazole-4-carboxamide from 5-amino-1-(5-phospho-D-ribosyl)imidazole-4-carboxylate: step 2/2. In terms of biological role, catalyzes two reactions in de novo purine nucleotide biosynthesis. Catalyzes the breakdown of 5-aminoimidazole- (N-succinylocarboxamide) ribotide (SAICAR or 2-[5-amino-1-(5-phospho-beta-D-ribosyl)imidazole-4-carboxamido]succinate) to 5-aminoimidazole-4-carboxamide ribotide (AICAR or 5-amino-1-(5-phospho-beta-D-ribosyl)imidazole-4-carboxamide) and fumarate, and of adenylosuccinate (ADS or N(6)-(1,2-dicarboxyethyl)-AMP) to adenosine monophosphate (AMP) and fumarate. The chain is Adenylosuccinate lyase (purB) from Buchnera aphidicola subsp. Schizaphis graminum (strain Sg).